A 101-amino-acid chain; its full sequence is Large ribosomal subunit protein uL24 (101 aa).

Belongs to the universal ribosomal protein uL24 family. As to quaternary structure, part of the 50S ribosomal subunit.

In terms of biological role, one of two assembly initiator proteins, it binds directly to the 5'-end of the 23S rRNA, where it nucleates assembly of the 50S subunit. One of the proteins that surrounds the polypeptide exit tunnel on the outside of the subunit. The chain is Large ribosomal subunit protein uL24 from Streptococcus suis (strain 98HAH33).